A 120-amino-acid polypeptide reads, in one-letter code: MRLPAQLLGLLMLWVPGSSGDVVMTQSPLSLPVTLGQPASISCRSSQSLVYSDGNTYLNWFQQRPGQSPRRLIYKVSNRDSGVPDRFSGSGSGTDFTLKISRVEAEDVGVYYCMQGTHWP.

A signal peptide spans 1-20; that stretch reads MRLPAQLLGLLMLWVPGSSG. Residues 21–43 are framework-1; the sequence is DVVMTQSPLSLPVTLGQPASISC. Residues 21–120 form the Ig-like domain; that stretch reads DVVMTQSPLS…YYCMQGTHWP (100 aa). Cys43 and Cys113 form a disulfide bridge. Positions 44–59 are complementarity-determining-1; sequence RSSQSLVYSDGNTYLN. Positions 60–74 are framework-2; the sequence is WFQQRPGQSPRRLIY. The complementarity-determining-2 stretch occupies residues 75–81; it reads KVSNRDS. The framework-3 stretch occupies residues 82–113; that stretch reads GVPDRFSGSGSGTDFTLKISRVEAEDVGVYYC. The segment at 114–120 is complementarity-determining-3; it reads MQGTHWP.

As to quaternary structure, immunoglobulins are composed of two identical heavy chains and two identical light chains; disulfide-linked.

The protein resides in the secreted. It localises to the cell membrane. Its function is as follows. V region of the variable domain of immunoglobulin light chains that participates in the antigen recognition. Immunoglobulins, also known as antibodies, are membrane-bound or secreted glycoproteins produced by B lymphocytes. In the recognition phase of humoral immunity, the membrane-bound immunoglobulins serve as receptors which, upon binding of a specific antigen, trigger the clonal expansion and differentiation of B lymphocytes into immunoglobulins-secreting plasma cells. Secreted immunoglobulins mediate the effector phase of humoral immunity, which results in the elimination of bound antigens. The antigen binding site is formed by the variable domain of one heavy chain, together with that of its associated light chain. Thus, each immunoglobulin has two antigen binding sites with remarkable affinity for a particular antigen. The variable domains are assembled by a process called V-(D)-J rearrangement and can then be subjected to somatic hypermutations which, after exposure to antigen and selection, allow affinity maturation for a particular antigen. This is Immunoglobulin kappa variable 2-30 from Homo sapiens (Human).